Here is a 468-residue protein sequence, read N- to C-terminus: Glycosyl hydrolase family 109 protein (468 aa).

A signal peptide spans 1 to 19; the sequence is MVYKVFLSLCIGLALSASA. Residues 67 to 68, Asp-89, 138 to 141, 158 to 159, and Asn-187 each bind NAD(+); these read MR, WKTH, and EV. Substrate contacts are provided by residues Tyr-216, Arg-232, 244 to 247, and Tyr-322; that span reads YATH. Residue Tyr-244 coordinates NAD(+).

Belongs to the Gfo/Idh/MocA family. Glycosyl hydrolase 109 subfamily. NAD(+) is required as a cofactor.

Glycosidase. The protein is Glycosyl hydrolase family 109 protein of Porphyromonas gingivalis (strain ATCC BAA-308 / W83).